We begin with the raw amino-acid sequence, 248 residues long: Proteasome subunit alpha type-7 (248 aa).

A glycan (O-linked (GlcNAc) serine) is linked at Ser-130. A Phosphotyrosine modification is found at Tyr-153. Lys-227 is subject to N6-acetyllysine.

The protein belongs to the peptidase T1A family. As to quaternary structure, the 26S proteasome consists of a 20S proteasome core and two 19S regulatory subunits. The 20S proteasome core is a barrel-shaped complex made of 28 subunits that are arranged in four stacked rings. The two outer rings are each formed by seven alpha subunits, and the two inner rings are formed by seven beta subunits. The proteolytic activity is exerted by three beta-subunits PSMB5, PSMB6 and PSMB7. PSMA7 interacts directly with the PSMG1-PSMG2 heterodimer which promotes 20S proteasome assembly. Interacts with HIF1A. Interacts with RAB7A. Interacts with PRKN. Interacts with ABL1 and ABL2. Interacts with EMAP2. Interacts with MAVS.

It localises to the cytoplasm. The protein resides in the nucleus. Component of the 20S core proteasome complex involved in the proteolytic degradation of most intracellular proteins. This complex plays numerous essential roles within the cell by associating with different regulatory particles. Associated with two 19S regulatory particles, forms the 26S proteasome and thus participates in the ATP-dependent degradation of ubiquitinated proteins. The 26S proteasome plays a key role in the maintenance of protein homeostasis by removing misfolded or damaged proteins that could impair cellular functions, and by removing proteins whose functions are no longer required. Associated with the PA200 or PA28, the 20S proteasome mediates ubiquitin-independent protein degradation. This type of proteolysis is required in several pathways including spermatogenesis (20S-PA200 complex) or generation of a subset of MHC class I-presented antigenic peptides (20S-PA28 complex). Inhibits the transactivation function of HIF-1A under both normoxic and hypoxia-mimicking conditions. The interaction with EMAP2 increases the proteasome-mediated HIF-1A degradation under the hypoxic conditions. Plays a role in hepatitis C virus internal ribosome entry site-mediated translation. Mediates nuclear translocation of the androgen receptor (AR) and thereby enhances androgen-mediated transactivation. Promotes MAVS degradation and thereby negatively regulates MAVS-mediated innate immune response. This chain is Proteasome subunit alpha type-7 (PSMA7), found in Bos taurus (Bovine).